Here is a 500-residue protein sequence, read N- to C-terminus: Glycerol kinase (500 aa).

Thr-16 serves as a coordination point for ADP. The ATP site is built by Thr-16 and Thr-17. Thr-16 is a sn-glycerol 3-phosphate binding site. Arg-20 contributes to the ADP binding site. Sn-glycerol 3-phosphate-binding residues include Arg-86, Glu-87, Tyr-138, and Asp-243. 5 residues coordinate glycerol: Arg-86, Glu-87, Tyr-138, Asp-243, and Gln-244. ADP is bound by residues Thr-265 and Gly-313. ATP is bound by residues Thr-265, Gly-313, Gln-317, and Gly-414. 2 residues coordinate ADP: Gly-414 and Asn-418.

It belongs to the FGGY kinase family.

The enzyme catalyses glycerol + ATP = sn-glycerol 3-phosphate + ADP + H(+). Its pathway is polyol metabolism; glycerol degradation via glycerol kinase pathway; sn-glycerol 3-phosphate from glycerol: step 1/1. With respect to regulation, inhibited by fructose 1,6-bisphosphate (FBP). In terms of biological role, key enzyme in the regulation of glycerol uptake and metabolism. Catalyzes the phosphorylation of glycerol to yield sn-glycerol 3-phosphate. This is Glycerol kinase from Trichormus variabilis (strain ATCC 29413 / PCC 7937) (Anabaena variabilis).